Reading from the N-terminus, the 167-residue chain is NADH-ubiquinone oxidoreductase chain 6 (167 aa).

The next 4 helical transmembrane spans lie at 21-41, 45-65, 78-98, and 132-152; these read SPYY…LLLL, IIFP…VVFI, PINL…ITMI, and SMFI…LEVV.

It belongs to the complex I subunit 6 family.

The protein resides in the mitochondrion membrane. The enzyme catalyses a ubiquinone + NADH + 5 H(+)(in) = a ubiquinol + NAD(+) + 4 H(+)(out). In terms of biological role, core subunit of the mitochondrial membrane respiratory chain NADH dehydrogenase (Complex I) that is believed to belong to the minimal assembly required for catalysis. Complex I functions in the transfer of electrons from NADH to the respiratory chain. The immediate electron acceptor for the enzyme is believed to be ubiquinone. The sequence is that of NADH-ubiquinone oxidoreductase chain 6 (ND6) from Branchiostoma floridae (Florida lancelet).